We begin with the raw amino-acid sequence, 405 residues long: Imidazolonepropionase (405 aa).

Histidine 72 and histidine 74 together coordinate Fe(3+). The Zn(2+) site is built by histidine 72 and histidine 74. Residues arginine 81, tyrosine 144, and histidine 177 each coordinate 4-imidazolone-5-propanoate. Tyrosine 144 lines the N-formimidoyl-L-glutamate pocket. Histidine 242 is a Fe(3+) binding site. Histidine 242 provides a ligand contact to Zn(2+). A 4-imidazolone-5-propanoate-binding site is contributed by glutamine 245. Position 317 (aspartate 317) interacts with Fe(3+). Residue aspartate 317 coordinates Zn(2+). Residues asparagine 319 and glycine 321 each coordinate N-formimidoyl-L-glutamate. A 4-imidazolone-5-propanoate-binding site is contributed by threonine 322.

Belongs to the metallo-dependent hydrolases superfamily. HutI family. The cofactor is Zn(2+). Fe(3+) serves as cofactor.

Its subcellular location is the cytoplasm. The enzyme catalyses 4-imidazolone-5-propanoate + H2O = N-formimidoyl-L-glutamate. It participates in amino-acid degradation; L-histidine degradation into L-glutamate; N-formimidoyl-L-glutamate from L-histidine: step 3/3. Its function is as follows. Catalyzes the hydrolytic cleavage of the carbon-nitrogen bond in imidazolone-5-propanoate to yield N-formimidoyl-L-glutamate. It is the third step in the universal histidine degradation pathway. This Klebsiella pneumoniae (strain 342) protein is Imidazolonepropionase.